Consider the following 311-residue polypeptide: Methionyl-tRNA formyltransferase (311 aa).

112–115 (SLLP) is a (6S)-5,6,7,8-tetrahydrofolate binding site.

The protein belongs to the Fmt family.

It carries out the reaction L-methionyl-tRNA(fMet) + (6R)-10-formyltetrahydrofolate = N-formyl-L-methionyl-tRNA(fMet) + (6S)-5,6,7,8-tetrahydrofolate + H(+). In terms of biological role, attaches a formyl group to the free amino group of methionyl-tRNA(fMet). The formyl group appears to play a dual role in the initiator identity of N-formylmethionyl-tRNA by promoting its recognition by IF2 and preventing the misappropriation of this tRNA by the elongation apparatus. The protein is Methionyl-tRNA formyltransferase of Bradyrhizobium sp. (strain ORS 278).